Reading from the N-terminus, the 653-residue chain is Amyloid beta A4 precursor protein-binding family B member 1-interacting protein (653 aa).

Residues 82-141 (NNKSTAPFPPADASNSYHFHPPPMPSIITEDLSLLPPPPEFDPHYPPPPPDPLTEPKTQE) form a disordered region. The segment covering 116–134 (LPPPPEFDPHYPPPPPDPL) has biased composition (pro residues). Residues 165-253 (KKRIVKVHMI…IHFLEKNEKY (89 aa)) form the Ras-associating domain. The PH domain occupies 295–404 (VPELEAALYL…WVTGIRIAKY (110 aa)). Residues 462 to 481 (KHGEANKQEKKSSEVNKPET) are compositionally biased toward basic and acidic residues. Residues 462-653 (KHGEANKQEK…ALQKKREPPT (192 aa)) form a disordered region. Residues 585–604 (PAPPPPPPPPAPAANVPPLP) show a composition bias toward pro residues. Residues 605–614 (VKKHPPKPPK) are compositionally biased toward basic residues.

Belongs to the MRL family.

It localises to the cell membrane. It is found in the cytoplasm. The protein localises to the cytoskeleton. Appears to function in the signal transduction from Ras activation to actin cytoskeletal remodeling. The chain is Amyloid beta A4 precursor protein-binding family B member 1-interacting protein (apbb1ip) from Xenopus laevis (African clawed frog).